Here is a 461-residue protein sequence, read N- to C-terminus: Ribulose bisphosphate carboxylase (461 aa).

Asn112 contacts substrate. Residue Lys167 is the Proton acceptor of the active site. Lys169 serves as a coordination point for substrate. 3 residues coordinate Mg(2+): Lys192, Asp194, and Glu195. Lys192 carries the post-translational modification N6-carboxylysine. The active-site Proton acceptor is His288. Arg289, His322, and Ser369 together coordinate substrate.

The protein belongs to the RuBisCO large chain family. Type II subfamily. In terms of assembly, homodimer. Mg(2+) serves as cofactor.

It carries out the reaction 2 (2R)-3-phosphoglycerate + 2 H(+) = D-ribulose 1,5-bisphosphate + CO2 + H2O. It catalyses the reaction D-ribulose 1,5-bisphosphate + O2 = 2-phosphoglycolate + (2R)-3-phosphoglycerate + 2 H(+). RuBisCO catalyzes two reactions: the carboxylation of D-ribulose 1,5-bisphosphate, the primary event in carbon dioxide fixation, as well as the oxidative fragmentation of the pentose substrate. Both reactions occur simultaneously and in competition at the same active site. This Rhodopseudomonas palustris (strain BisB5) protein is Ribulose bisphosphate carboxylase.